We begin with the raw amino-acid sequence, 153 residues long: Calmodulin-like protein 4 (153 aa).

EF-hand domains are found at residues 8 to 43, 44 to 79, 81 to 116, and 117 to 152; these read DQIN…LGAS, PTPG…QIKQ, DPKK…LGEK, and LTHK…PVRD.

It belongs to the calmodulin family. As to quaternary structure, interacts with MYO7B; the interaction mediates the association of CALML4 with the IMAC/intermicrovillar adhesion complex. Interacts with MYO7A. Expressed in the small intestine, in both mature enterocytes on the villus surface and immature cells that reside in the crypt stem-cell niche.

The protein localises to the cell projection. It localises to the microvillus. Its function is as follows. As part of the intermicrovillar adhesion complex/IMAC plays a role in epithelial brush border differentiation, controlling microvilli organization and length. Acts as a light chain for MYO7B and is required for efficient targeting of the IMAC to the tips of border brush microvilli. In Mus musculus (Mouse), this protein is Calmodulin-like protein 4 (Calml4).